We begin with the raw amino-acid sequence, 491 residues long: Protein SET DOMAIN GROUP 40 (491 aa).

Residues 36-278 form the SET domain; that stretch reads HSLSVSDFPD…LGEQVLLCYG (243 aa).

This sequence belongs to the class V-like SAM-binding methyltransferase superfamily.

The sequence is that of Protein SET DOMAIN GROUP 40 (SDG40) from Arabidopsis thaliana (Mouse-ear cress).